A 247-amino-acid polypeptide reads, in one-letter code: ATP synthase subunit a, chloroplastic (247 aa).

A run of 5 helical transmembrane segments spans residues glutamine 38 to valine 58, valine 95 to leucine 115, isoleucine 134 to threonine 154, leucine 199 to leucine 219, and glycine 220 to glycine 240.

It belongs to the ATPase A chain family. In terms of assembly, F-type ATPases have 2 components, CF(1) - the catalytic core - and CF(0) - the membrane proton channel. CF(1) has five subunits: alpha(3), beta(3), gamma(1), delta(1), epsilon(1). CF(0) has four main subunits: a, b, b' and c.

Its subcellular location is the plastid. It is found in the chloroplast thylakoid membrane. Key component of the proton channel; it plays a direct role in the translocation of protons across the membrane. This is ATP synthase subunit a, chloroplastic from Solanum lycopersicum (Tomato).